A 95-amino-acid polypeptide reads, in one-letter code: Pyrimidine/purine nucleoside phosphorylase (95 aa).

Belongs to the nucleoside phosphorylase PpnP family.

It carries out the reaction a purine D-ribonucleoside + phosphate = a purine nucleobase + alpha-D-ribose 1-phosphate. The catalysed reaction is adenosine + phosphate = alpha-D-ribose 1-phosphate + adenine. It catalyses the reaction cytidine + phosphate = cytosine + alpha-D-ribose 1-phosphate. The enzyme catalyses guanosine + phosphate = alpha-D-ribose 1-phosphate + guanine. It carries out the reaction inosine + phosphate = alpha-D-ribose 1-phosphate + hypoxanthine. The catalysed reaction is thymidine + phosphate = 2-deoxy-alpha-D-ribose 1-phosphate + thymine. It catalyses the reaction uridine + phosphate = alpha-D-ribose 1-phosphate + uracil. The enzyme catalyses xanthosine + phosphate = alpha-D-ribose 1-phosphate + xanthine. In terms of biological role, catalyzes the phosphorolysis of diverse nucleosides, yielding D-ribose 1-phosphate and the respective free bases. Can use uridine, adenosine, guanosine, cytidine, thymidine, inosine and xanthosine as substrates. Also catalyzes the reverse reactions. The protein is Pyrimidine/purine nucleoside phosphorylase of Yersinia enterocolitica serotype O:8 / biotype 1B (strain NCTC 13174 / 8081).